An 83-amino-acid polypeptide reads, in one-letter code: Molybdopterin synthase sulfur carrier subunit (83 aa).

This sequence belongs to the MoaD family.

The protein operates within cofactor biosynthesis; molybdopterin biosynthesis. In terms of biological role, involved in sulfur transfer in the conversion of molybdopterin precursor Z to molybdopterin. Probably plays a role in host phagosome maturation arrest. This chain is Molybdopterin synthase sulfur carrier subunit (moaD1), found in Mycobacterium tuberculosis (strain ATCC 25618 / H37Rv).